The chain runs to 258 residues: Enterotoxin type D (258 aa).

The signal sequence occupies residues 1-25 (MKKFNILIALLFFTSLVISPLNVKA). Zn(2+) is bound by residues D212, H248, H250, and D252.

It belongs to the staphylococcal/streptococcal toxin family. As to quaternary structure, homodimer; zinc-dependent. Interacts with MHC class II molecules composed of alpha/HLA-DRA and beta/HLA-DRB1 chains. It depends on Zn(2+) as a cofactor.

The protein localises to the secreted. In terms of biological role, staphylococcal enterotoxin that activates the host immune system by binding as unprocessed molecules to major histocompatibility (MHC) complex class II and T-cell receptor (TCR) molecules. In turn, this ternary complex activates a large number of T-lymphocytes initiating a systemic release of pro-inflammatory cytokines. In addition, induces B-cell proliferation and differentiation in the presence of T-cells. Causes also the intoxication staphylococcal food poisoning syndrome. The protein is Enterotoxin type D (entD) of Staphylococcus aureus.